A 290-amino-acid chain; its full sequence is Pyridoxal 5'-phosphate synthase subunit PdxS (290 aa).

A D-ribose 5-phosphate-binding site is contributed by aspartate 22. Lysine 79 (schiff-base intermediate with D-ribose 5-phosphate) is an active-site residue. Glycine 151 is a binding site for D-ribose 5-phosphate. Position 163 (arginine 163) interacts with D-glyceraldehyde 3-phosphate. Residues glycine 212 and 233 to 234 (GS) each bind D-ribose 5-phosphate.

Belongs to the PdxS/SNZ family. As to quaternary structure, in the presence of PdxT, forms a dodecamer of heterodimers.

The catalysed reaction is aldehydo-D-ribose 5-phosphate + D-glyceraldehyde 3-phosphate + L-glutamine = pyridoxal 5'-phosphate + L-glutamate + phosphate + 3 H2O + H(+). It participates in cofactor biosynthesis; pyridoxal 5'-phosphate biosynthesis. Its function is as follows. Catalyzes the formation of pyridoxal 5'-phosphate from ribose 5-phosphate (RBP), glyceraldehyde 3-phosphate (G3P) and ammonia. The ammonia is provided by the PdxT subunit. Can also use ribulose 5-phosphate and dihydroxyacetone phosphate as substrates, resulting from enzyme-catalyzed isomerization of RBP and G3P, respectively. In Clostridium botulinum (strain Loch Maree / Type A3), this protein is Pyridoxal 5'-phosphate synthase subunit PdxS.